We begin with the raw amino-acid sequence, 365 residues long: Alanine racemase (365 aa).

Lys-32 (proton acceptor; specific for D-alanine) is an active-site residue. Lys-32 carries the post-translational modification N6-(pyridoxal phosphate)lysine. Substrate is bound at residue Arg-128. Residue Tyr-257 is the Proton acceptor; specific for L-alanine of the active site. Met-305 lines the substrate pocket.

Belongs to the alanine racemase family. Pyridoxal 5'-phosphate serves as cofactor.

It carries out the reaction L-alanine = D-alanine. The protein operates within amino-acid biosynthesis; D-alanine biosynthesis; D-alanine from L-alanine: step 1/1. Functionally, catalyzes the interconversion of L-alanine and D-alanine. May also act on other amino acids. This chain is Alanine racemase (alr), found in Francisella tularensis subsp. mediasiatica (strain FSC147).